A 61-amino-acid polypeptide reads, in one-letter code: Metallothionein-2A (61 aa).

Position 1 is an N-acetylmethionine (methionine 1). A beta region spans residues 1–29; the sequence is MDPNCSCAAGGSCTCAGSCKCKDCKCTSC. Residues cysteine 5, cysteine 7, cysteine 13, cysteine 15, cysteine 19, cysteine 21, cysteine 24, cysteine 26, cysteine 29, cysteine 33, cysteine 34, cysteine 36, cysteine 37, cysteine 41, cysteine 44, cysteine 48, cysteine 50, and cysteine 57 each contribute to the a divalent metal cation site. The segment at 30–61 is alpha; it reads KKSCCSCCPVGCAKCAQGCICKGASDKCSCCA. Serine 58 is subject to Phosphoserine. 2 residues coordinate a divalent metal cation: cysteine 59 and cysteine 60.

It belongs to the metallothionein superfamily. Type 1 family. As to quaternary structure, interacts with EOLA1.

Metallothioneins have a high content of cysteine residues that bind various heavy metals; these proteins are transcriptionally regulated by both heavy metals and glucocorticoids. This is Metallothionein-2A (MT2A) from Sus scrofa (Pig).